A 625-amino-acid polypeptide reads, in one-letter code: Threonine--tRNA ligase (625 aa).

The tract at residues 1–147 is editing domain; the sequence is MRMLLIHSDY…TIVPEEAKVE (147 aa). The interval 206–505 is catalytic; that stretch reads PHVRLMLEHE…MQEGKKPMFP (300 aa). Zn(2+) is bound by residues cysteine 298, histidine 350, and histidine 474.

It belongs to the class-II aminoacyl-tRNA synthetase family. Homodimer. Zn(2+) serves as cofactor.

The protein localises to the cytoplasm. The catalysed reaction is tRNA(Thr) + L-threonine + ATP = L-threonyl-tRNA(Thr) + AMP + diphosphate + H(+). Functionally, catalyzes the attachment of threonine to tRNA(Thr) in a two-step reaction: L-threonine is first activated by ATP to form Thr-AMP and then transferred to the acceptor end of tRNA(Thr). Also edits incorrectly charged L-seryl-tRNA(Thr). In Pyrococcus furiosus (strain ATCC 43587 / DSM 3638 / JCM 8422 / Vc1), this protein is Threonine--tRNA ligase.